Reading from the N-terminus, the 479-residue chain is Anaerobic nitric oxide reductase flavorubredoxin (479 aa).

The zinc metallo-hydrolase stretch occupies residues 30 to 210 (LRGSSYNSYL…PFSRLVTPKI (181 aa)). Residues H79, E81, D83, H147, D166, and H227 each contribute to the Fe cation site. The Flavodoxin-like domain maps to 254-393 (ITIFYDTMSN…LCRQHGRDIA (140 aa)). FMN is bound by residues 260–264 (TMSNN) and 342–369 (AFGS…EMSL). In terms of domain architecture, Rubredoxin-like spans 423-474 (GPKMQCSVCQWIYDPALGEPLQDVAPGTPWSDVPDNFLCPECSLGKDVFDVL). The Fe cation site is built by C428, C431, C461, and C464.

The protein in the N-terminal section; belongs to the zinc metallo-hydrolase group 3 family. Homotetramer. The cofactor is Fe cation. FMN is required as a cofactor.

It localises to the cytoplasm. It participates in nitrogen metabolism; nitric oxide reduction. In terms of biological role, anaerobic nitric oxide reductase; uses NADH to detoxify nitric oxide (NO), protecting several 4Fe-4S NO-sensitive enzymes. Has at least 2 reductase partners, only one of which (NorW, flavorubredoxin reductase) has been identified. NO probably binds to the di-iron center; electrons enter from the NorW at rubredoxin and are transferred sequentially to the FMN center and the di-iron center. Also able to function as an aerobic oxygen reductase. This chain is Anaerobic nitric oxide reductase flavorubredoxin, found in Salmonella arizonae (strain ATCC BAA-731 / CDC346-86 / RSK2980).